We begin with the raw amino-acid sequence, 257 residues long: Melatonin receptor type 1A (257 aa).

Topologically, residues 5–22 are extracellular; sequence LASIVNDGWSLSSLHCQL. A disulfide bond links Cys20 and Cys97. A helical transmembrane segment spans residues 23–43; it reads SGFLMGLSVIGSVFNITGIAI. At 44 to 64 the chain is on the cytoplasmic side; that stretch reads NRYCCICHSLRYNKLYSSTNS. Residues 65–85 form a helical membrane-spanning segment; the sequence is LCYVFLIWMLTLVAIVPNLCV. The Extracellular portion of the chain corresponds to 86–107; sequence GTLQYDPRIYSCTFTQSVSSAY. A helical transmembrane segment spans residues 108-128; the sequence is TIAVVVFHFIVPMLVVIFCYL. The Cytoplasmic portion of the chain corresponds to 129-160; that stretch reads RIWALVLQVRWRVKPDNKPKLKPQDFRNFVTM. The helical transmembrane segment at 161–181 threads the bilayer; sequence FVVFVLFAICWAPLNFIGLVV. Topologically, residues 182 to 194 are extracellular; the sequence is ASEPASMAPRIPE. The helical transmembrane segment at 195-215 threads the bilayer; sequence WLFVASYYMGYFNSCLNAIIY. Residues 216–257 lie on the Cytoplasmic side of the membrane; the sequence is GLLNQNFRQEYRKIIVSLCTTKMFFVDSSNHVAHRIKRKPSP.

Belongs to the G-protein coupled receptor 1 family.

It localises to the cell membrane. In terms of biological role, high affinity receptor for melatonin. Likely to mediate the reproductive and circadian actions of melatonin. The activity of this receptor is mediated by pertussis toxin sensitive G proteins that inhibit adenylate cyclase activity. Possibly involved in sleep induction, by melatonin activation of the potassium channel KCNMA1/BK and the dissociation of G-beta and G-gamma subunits, thereby decreasing synaptic transmission. The sequence is that of Melatonin receptor type 1A (MTNR1A) from Bos taurus (Bovine).